We begin with the raw amino-acid sequence, 197 residues long: Large ribosomal subunit protein uL11 (197 aa).

The protein belongs to the universal ribosomal protein uL11 family. Part of the ribosomal stalk of the 50S ribosomal subunit. Interacts with L10 and the large rRNA to form the base of the stalk. L10 forms an elongated spine to which L12 dimers bind in a sequential fashion forming a multimeric L10(L12)X complex. Post-translationally, one or more lysine residues are methylated.

Its function is as follows. Forms part of the ribosomal stalk which helps the ribosome interact with GTP-bound translation factors. This is Large ribosomal subunit protein uL11 from Mycoplasma mobile (strain ATCC 43663 / 163K / NCTC 11711) (Mesomycoplasma mobile).